A 286-amino-acid chain; its full sequence is 4-hydroxybenzoate octaprenyltransferase (286 aa).

A run of 8 helical transmembrane segments spans residues 20 to 40 (IGTLLLLWPCLMALVLAAQGL), 43 to 63 (IKVLLIFIVGVVIMRANGCII), 96 to 116 (LFTLLGLAAFCLVLWLNPLVV), 142 to 162 (FLGIVWSWSIPMAYAAQLGEV), 167 to 187 (WWLFMANWCWTVAYDTMYAIV), 210 to 230 (QIIGVFQLAALGCFVMAGLVA), 235 to 255 (IYGLGIISFIGFAVYQQRLIF), and 266 to 286 (FLNNNWAGMVLFIALALDYMI).

Belongs to the UbiA prenyltransferase family. Mg(2+) is required as a cofactor.

The protein resides in the cell inner membrane. It carries out the reaction all-trans-octaprenyl diphosphate + 4-hydroxybenzoate = 4-hydroxy-3-(all-trans-octaprenyl)benzoate + diphosphate. The protein operates within cofactor biosynthesis; ubiquinone biosynthesis. Catalyzes the prenylation of para-hydroxybenzoate (PHB) with an all-trans polyprenyl group. Mediates the second step in the final reaction sequence of ubiquinone-8 (UQ-8) biosynthesis, which is the condensation of the polyisoprenoid side chain with PHB, generating the first membrane-bound Q intermediate 3-octaprenyl-4-hydroxybenzoate. This Shewanella frigidimarina (strain NCIMB 400) protein is 4-hydroxybenzoate octaprenyltransferase.